The following is an 879-amino-acid chain: Alanine--tRNA ligase (879 aa).

The Zn(2+) site is built by His-566, His-570, Cys-668, and His-672.

The protein belongs to the class-II aminoacyl-tRNA synthetase family. Zn(2+) serves as cofactor.

Its subcellular location is the cytoplasm. The catalysed reaction is tRNA(Ala) + L-alanine + ATP = L-alanyl-tRNA(Ala) + AMP + diphosphate. Functionally, catalyzes the attachment of alanine to tRNA(Ala) in a two-step reaction: alanine is first activated by ATP to form Ala-AMP and then transferred to the acceptor end of tRNA(Ala). Also edits incorrectly charged Ser-tRNA(Ala) and Gly-tRNA(Ala) via its editing domain. The protein is Alanine--tRNA ligase of Clostridium kluyveri (strain ATCC 8527 / DSM 555 / NBRC 12016 / NCIMB 10680 / K1).